We begin with the raw amino-acid sequence, 369 residues long: Isocitrate dehydrogenase [NAD] subunit 2, mitochondrial (369 aa).

Residues 1-15 (MLRNTFFRNTSRRFL) constitute a mitochondrion transit peptide. Threonine 105 is modified (phosphothreonine). Substrate-binding residues include arginine 119, arginine 129, and arginine 150. The residue at position 153 (threonine 153) is a Phosphothreonine. Aspartate 237 serves as a coordination point for substrate. Mg(2+)-binding residues include aspartate 237, aspartate 263, and aspartate 267. 2 positions are modified to phosphothreonine: threonine 327 and threonine 349.

Belongs to the isocitrate and isopropylmalate dehydrogenases family. As to quaternary structure, octamer of two non-identical subunits IDH1 and IDH2. Mg(2+) is required as a cofactor. Requires Mn(2+) as cofactor.

The protein localises to the mitochondrion matrix. The enzyme catalyses D-threo-isocitrate + NAD(+) = 2-oxoglutarate + CO2 + NADH. Allosterically regulated by several compounds including AMP, NAD(+), and citrate. In terms of biological role, performs an essential role in the oxidative function of the citric acid cycle. Also binds RNA; specifically to the 5'-untranslated leaders of mitochondrial mRNAs. The chain is Isocitrate dehydrogenase [NAD] subunit 2, mitochondrial (IDH2) from Saccharomyces cerevisiae (strain ATCC 204508 / S288c) (Baker's yeast).